The following is a 688-amino-acid chain: UvrABC system protein C (688 aa).

The span at 1-14 (MSPLDQKNKPRGGA) shows a compositional bias: basic and acidic residues. A disordered region spans residues 1-20 (MSPLDQKNKPRGGADDLPPE). Positions 71-149 (NAPGVYRMMN…IKRLRPRFNV (79 aa)) constitute a GIY-YIG domain. The UVR domain maps to 259–294 (QKVKTEISAAMQQASEDLDFERAAIYRDRLAALSHV).

Belongs to the UvrC family. In terms of assembly, interacts with UvrB in an incision complex.

The protein resides in the cytoplasm. The UvrABC repair system catalyzes the recognition and processing of DNA lesions. UvrC both incises the 5' and 3' sides of the lesion. The N-terminal half is responsible for the 3' incision and the C-terminal half is responsible for the 5' incision. The protein is UvrABC system protein C of Mesorhizobium japonicum (strain LMG 29417 / CECT 9101 / MAFF 303099) (Mesorhizobium loti (strain MAFF 303099)).